We begin with the raw amino-acid sequence, 38 residues long: MKVRPSVKPMCEHCKVIKRHGRVMVICPANPKHKQRQG.

Belongs to the bacterial ribosomal protein bL36 family.

The sequence is that of Large ribosomal subunit protein bL36 from Lactobacillus acidophilus (strain ATCC 700396 / NCK56 / N2 / NCFM).